A 382-amino-acid chain; its full sequence is Probable protein phosphatase 2C 65 (382 aa).

A PPM-type phosphatase domain is found at 47–337 (HVSMSIKQGK…DDCAVVVLYL (291 aa)). Mn(2+) is bound by residues Asp-83 and Gly-84. The tract at residues 107 to 126 (KIRSSKSAGDENIENNSSQS) is disordered. Mn(2+) contacts are provided by Asp-282 and Asp-328.

The protein belongs to the PP2C family. Mg(2+) serves as cofactor. Mn(2+) is required as a cofactor.

The catalysed reaction is O-phospho-L-seryl-[protein] + H2O = L-seryl-[protein] + phosphate. The enzyme catalyses O-phospho-L-threonyl-[protein] + H2O = L-threonyl-[protein] + phosphate. The polypeptide is Probable protein phosphatase 2C 65 (Arabidopsis thaliana (Mouse-ear cress)).